The following is a 36-amino-acid chain: VCVLAHHFGKEFTPQVQAAYQKVVAGVANALAHKYH.

In terms of domain architecture, Globin spans 1-36 (VCVLAHHFGKEFTPQVQAAYQKVVAGVANALAHKYH). Residue Lys34 is modified to N6-acetyllysine.

Belongs to the globin family. In terms of assembly, heterotetramer of two alpha chains and two beta chains. In terms of tissue distribution, red blood cells.

Involved in oxygen transport from the lung to the various peripheral tissues. The sequence is that of Hemoglobin subunit beta (HBB) from Pongo pygmaeus (Bornean orangutan).